Consider the following 358-residue polypeptide: Heme A synthase (358 aa).

The next 8 membrane-spanning stretches (helical) occupy residues 25–45 (LVRY…MVGG), 111–131 (LLAR…WLTG), 141–161 (MLGL…MVAS), 176–196 (IHLT…RGLV), 210–230 (FAGW…LVAG), 269–289 (VQFV…LHAV), 304–324 (TIVL…TLLM), and 326–346 (APLH…AFAV). Histidine 273 lines the heme pocket. A heme-binding site is contributed by histidine 334.

Belongs to the COX15/CtaA family. Type 2 subfamily. Interacts with CtaB. Requires heme b as cofactor.

Its subcellular location is the cell membrane. The catalysed reaction is Fe(II)-heme o + 2 A + H2O = Fe(II)-heme a + 2 AH2. The protein operates within porphyrin-containing compound metabolism; heme A biosynthesis; heme A from heme O: step 1/1. In terms of biological role, catalyzes the conversion of heme O to heme A by two successive hydroxylations of the methyl group at C8. The first hydroxylation forms heme I, the second hydroxylation results in an unstable dihydroxymethyl group, which spontaneously dehydrates, resulting in the formyl group of heme A. The chain is Heme A synthase from Brucella suis (strain ATCC 23445 / NCTC 10510).